A 69-amino-acid chain; its full sequence is DNA-directed RNA polymerase subunit epsilon (69 aa).

The protein belongs to the RNA polymerase subunit epsilon family. As to quaternary structure, monomer. RNAP is composed of a core of 2 alpha, a beta and a beta' subunit. The core is associated with a delta subunit, and at least one of epsilon or omega. When a sigma factor is associated with the core the holoenzyme is formed, which can initiate transcription.

The protein resides in the cytoplasm. Its subcellular location is the nucleoid. The enzyme catalyses RNA(n) + a ribonucleoside 5'-triphosphate = RNA(n+1) + diphosphate. In terms of biological role, a non-essential component of RNA polymerase (RNAP). Has a similar structure to bacteriophage T7 protein Gp2 (AC P03704), which is known to bind to RNAP in the DNA binding-cleft. Unlike Gp2 however, this protein does not inhibit transcription initiation. In vitro reconstitution experiments show this subunit is dispensible. The protein is DNA-directed RNA polymerase subunit epsilon of Bacillus subtilis (strain 168).